Reading from the N-terminus, the 220-residue chain is Pyridoxine/pyridoxamine 5'-phosphate oxidase (220 aa).

Substrate-binding positions include 13 to 16 (RVEY) and Lys77. Residues 72–77 (RTVLCK), 87–88 (FT), Lys94, and Gln116 contribute to the FMN site. Substrate contacts are provided by Tyr134, Arg138, and Ser142. FMN is bound by residues 151–152 (QS) and Trp197. 203–205 (RLH) provides a ligand contact to substrate. Arg207 provides a ligand contact to FMN.

This sequence belongs to the pyridoxamine 5'-phosphate oxidase family. Homodimer. The cofactor is FMN.

The enzyme catalyses pyridoxamine 5'-phosphate + O2 + H2O = pyridoxal 5'-phosphate + H2O2 + NH4(+). It catalyses the reaction pyridoxine 5'-phosphate + O2 = pyridoxal 5'-phosphate + H2O2. Its pathway is cofactor metabolism; pyridoxal 5'-phosphate salvage; pyridoxal 5'-phosphate from pyridoxamine 5'-phosphate: step 1/1. The protein operates within cofactor metabolism; pyridoxal 5'-phosphate salvage; pyridoxal 5'-phosphate from pyridoxine 5'-phosphate: step 1/1. In terms of biological role, catalyzes the oxidation of either pyridoxine 5'-phosphate (PNP) or pyridoxamine 5'-phosphate (PMP) into pyridoxal 5'-phosphate (PLP). This is Pyridoxine/pyridoxamine 5'-phosphate oxidase from Mycolicibacterium paratuberculosis (strain ATCC BAA-968 / K-10) (Mycobacterium paratuberculosis).